Consider the following 476-residue polypeptide: NADH-quinone oxidoreductase subunit N (476 aa).

14 helical membrane-spanning segments follow: residues 4–24, 32–52, 67–87, 100–117, 121–141, 155–175, 198–218, 230–250, 263–283, 291–311, 319–339, 366–386, 406–426, and 447–467; these read LLAL…MLTI, LTAT…VVAW, GLAV…ATLG, EYYL…ALVS, LAAL…MLAY, YMVL…LLYS, LMAG…IVPF, PAPA…LVLL, LHSL…LLAL, LLGY…VVND, ALYL…VTLL, AVLT…GFIG, VVAG…TLFL, and VVVL…APMI.

The protein belongs to the complex I subunit 2 family. In terms of assembly, NDH-1 is composed of 14 different subunits. Subunits NuoA, H, J, K, L, M, N constitute the membrane sector of the complex.

The protein localises to the cell inner membrane. The enzyme catalyses a quinone + NADH + 5 H(+)(in) = a quinol + NAD(+) + 4 H(+)(out). NDH-1 shuttles electrons from NADH, via FMN and iron-sulfur (Fe-S) centers, to quinones in the respiratory chain. The immediate electron acceptor for the enzyme in this species is believed to be ubiquinone. Couples the redox reaction to proton translocation (for every two electrons transferred, four hydrogen ions are translocated across the cytoplasmic membrane), and thus conserves the redox energy in a proton gradient. The polypeptide is NADH-quinone oxidoreductase subunit N (Chromohalobacter salexigens (strain ATCC BAA-138 / DSM 3043 / CIP 106854 / NCIMB 13768 / 1H11)).